Here is a 44-residue protein sequence, read N- to C-terminus: Photosystem I reaction center subunit IX (44 aa).

The chain crosses the membrane as a helical span at residues 7–27 (YLSVAPVLSTLWFGSLAGLLI).

The protein belongs to the PsaJ family.

The protein resides in the plastid. It localises to the chloroplast thylakoid membrane. Functionally, may help in the organization of the PsaE and PsaF subunits. The protein is Photosystem I reaction center subunit IX of Arabis hirsuta (Hairy rock-cress).